A 261-amino-acid polypeptide reads, in one-letter code: Cytochrome c oxidase subunit 3 (261 aa).

The Mitochondrial matrix segment spans residues 1–15 (MTHQTHAYHMVNPSP). Residues 16–34 (WPLTGALSALLMTSGLVMW) form a helical membrane-spanning segment. The Mitochondrial intermembrane segment spans residues 35-40 (FHYHST). Residues 41–66 (ILVLLGLLTNILTMYQWWRDVVREGT) traverse the membrane as a helical segment. Residues 67–72 (FQGHHT) are Mitochondrial matrix-facing. Residues 73–105 (PTVQKGLRYGMVLFIISEVFFFAGFFWAFYHSS) form a helical membrane-spanning segment. Residues 106 to 128 (LAPTPELGGCWPPTGIHPLDPME) are Mitochondrial intermembrane-facing. Residues 129–152 (VPLLNTSVLLASGVTITWAHHSLM) form a helical membrane-spanning segment. Topologically, residues 153–155 (EGN) are mitochondrial matrix. Residues 156-183 (RKQMLQALFITISLGIYFTLLQASEYHE) form a helical membrane-spanning segment. Over 184–190 (ASFSISD) the chain is Mitochondrial intermembrane. A helical transmembrane segment spans residues 191 to 223 (GIYGSTFFMATGFHGLHVIIGSTFLAVCFLRQL). The Mitochondrial matrix portion of the chain corresponds to 224–232 (KFHFTSNHH). The chain crosses the membrane as a helical span at residues 233–256 (FGFEAAAWYWHFVDVVWLFLYVSI). The Mitochondrial intermembrane portion of the chain corresponds to 257–261 (YWWGS).

Belongs to the cytochrome c oxidase subunit 3 family. Component of the cytochrome c oxidase (complex IV, CIV), a multisubunit enzyme composed of 14 subunits. The complex is composed of a catalytic core of 3 subunits MT-CO1, MT-CO2 and MT-CO3, encoded in the mitochondrial DNA, and 11 supernumerary subunits COX4I, COX5A, COX5B, COX6A, COX6B, COX6C, COX7A, COX7B, COX7C, COX8 and NDUFA4, which are encoded in the nuclear genome. The complex exists as a monomer or a dimer and forms supercomplexes (SCs) in the inner mitochondrial membrane with NADH-ubiquinone oxidoreductase (complex I, CI) and ubiquinol-cytochrome c oxidoreductase (cytochrome b-c1 complex, complex III, CIII), resulting in different assemblies (supercomplex SCI(1)III(2)IV(1) and megacomplex MCI(2)III(2)IV(2)).

It localises to the mitochondrion inner membrane. It catalyses the reaction 4 Fe(II)-[cytochrome c] + O2 + 8 H(+)(in) = 4 Fe(III)-[cytochrome c] + 2 H2O + 4 H(+)(out). Its function is as follows. Component of the cytochrome c oxidase, the last enzyme in the mitochondrial electron transport chain which drives oxidative phosphorylation. The respiratory chain contains 3 multisubunit complexes succinate dehydrogenase (complex II, CII), ubiquinol-cytochrome c oxidoreductase (cytochrome b-c1 complex, complex III, CIII) and cytochrome c oxidase (complex IV, CIV), that cooperate to transfer electrons derived from NADH and succinate to molecular oxygen, creating an electrochemical gradient over the inner membrane that drives transmembrane transport and the ATP synthase. Cytochrome c oxidase is the component of the respiratory chain that catalyzes the reduction of oxygen to water. Electrons originating from reduced cytochrome c in the intermembrane space (IMS) are transferred via the dinuclear copper A center (CU(A)) of subunit 2 and heme A of subunit 1 to the active site in subunit 1, a binuclear center (BNC) formed by heme A3 and copper B (CU(B)). The BNC reduces molecular oxygen to 2 water molecules using 4 electrons from cytochrome c in the IMS and 4 protons from the mitochondrial matrix. The sequence is that of Cytochrome c oxidase subunit 3 (MT-CO3) from Dugong dugon (Dugong).